A 191-amino-acid chain; its full sequence is Ribosomal RNA small subunit methyltransferase G (191 aa).

S-adenosyl-L-methionine contacts are provided by residues glycine 62, leucine 67, 111 to 112, and arginine 124; that span reads IE.

The protein belongs to the methyltransferase superfamily. RNA methyltransferase RsmG family.

The protein localises to the cytoplasm. The catalysed reaction is guanosine(527) in 16S rRNA + S-adenosyl-L-methionine = N(7)-methylguanosine(527) in 16S rRNA + S-adenosyl-L-homocysteine. Its function is as follows. Specifically methylates the N7 position of guanine in position 527 of 16S rRNA. The polypeptide is Ribosomal RNA small subunit methyltransferase G (Rickettsia rickettsii (strain Sheila Smith)).